The following is a 550-amino-acid chain: Methionine--tRNA ligase (550 aa).

Residues 10–22 (LPYPNNSSPHLGN) carry the 'HIGH' region motif. Residues 336 to 340 (KFSKS) carry the 'KMSKS' region motif. K339 is an ATP binding site.

Belongs to the class-I aminoacyl-tRNA synthetase family.

The catalysed reaction is tRNA(Met) + L-methionine + ATP = L-methionyl-tRNA(Met) + AMP + diphosphate. In Acanthamoeba polyphaga mimivirus (APMV), this protein is Methionine--tRNA ligase (MARS).